We begin with the raw amino-acid sequence, 303 residues long: Protease HtpX (303 aa).

The next 2 helical transmembrane spans lie at 4–24 (IGLF…VFGI) and 42–62 (IASL…ISLF). His149 is a Zn(2+) binding site. The active site involves Glu150. His153 is a Zn(2+) binding site. Helical transmembrane passes span 157-177 (GDMV…MFFA) and 200-220 (FVTS…IVMW). A Zn(2+)-binding site is contributed by Glu226.

Belongs to the peptidase M48B family. It depends on Zn(2+) as a cofactor.

It localises to the cell inner membrane. The polypeptide is Protease HtpX (Psychrobacter sp. (strain PRwf-1)).